We begin with the raw amino-acid sequence, 307 residues long: Junctional adhesion molecule 2A (307 aa).

An N-terminal signal peptide occupies residues 1 to 18 (MLVCVSLLILIHSVPVSP). The 94-residue stretch at 19-112 (VTVSSRNPKV…EVSAPSDSIS (94 aa)) folds into the Ig-like V-type domain. Residues 19–226 (VTVSSRNPKV…FQTHDLNVAA (208 aa)) are Extracellular-facing. 2 disulfides stabilise this stretch: C40–C102 and C147–C197. An Ig-like C2-type domain is found at 126–225 (PQTPSCDVPS…TFQTHDLNVA (100 aa)). The helical transmembrane segment at 227-247 (VVSAVVLVCVILFLCAFGVCL) threads the bilayer. Residues 248–307 (AHRQGYFSRHRGRSFWIPHCHGVTHISSQNLNPSEHTQHSGYSHPPKEPQDFKHTQSFML) are Cytoplasmic-facing. Polar residues predominate over residues 278 to 288 (LNPSEHTQHSG). A disordered region spans residues 278-307 (LNPSEHTQHSGYSHPPKEPQDFKHTQSFML). A compositionally biased stretch (basic and acidic residues) spans 292–301 (PPKEPQDFKH).

Belongs to the immunoglobulin superfamily.

The protein resides in the cell membrane. Its subcellular location is the cell junction. The protein localises to the tight junction. In terms of biological role, junctional adhesion protein that mediates heterotypic cell-cell interactions to regulate different cellular processes. During myogenesis, it is involved in myocyte fusion through the binding of jam3b on neighboring myocytes. This Danio rerio (Zebrafish) protein is Junctional adhesion molecule 2A (jam2a).